Here is a 105-residue protein sequence, read N- to C-terminus: Putative RNA-binding protein RbpF (105 aa).

Residues 2–79 (SIYVGNLSYE…RDLKVNKAKP (78 aa)) form the RRM domain. Basic and acidic residues predominate over residues 75–84 (NKAKPKEDRG). The disordered stretch occupies residues 75-105 (NKAKPKEDRGSFGGGNRGGYGGGGGGGRSRY). Residues 85–105 (SFGGGNRGGYGGGGGGGRSRY) show a composition bias toward gly residues.

This is Putative RNA-binding protein RbpF (rbpF) from Nostoc sp. (strain PCC 7120 / SAG 25.82 / UTEX 2576).